A 432-amino-acid polypeptide reads, in one-letter code: Serine--tRNA ligase (432 aa).

235-237 (TSE) serves as a coordination point for L-serine. Position 266-268 (266-268 (RSE)) interacts with ATP. Residue Glu289 coordinates L-serine. ATP is bound at residue 353-356 (EISS). Ser388 is an L-serine binding site.

This sequence belongs to the class-II aminoacyl-tRNA synthetase family. Type-1 seryl-tRNA synthetase subfamily. In terms of assembly, homodimer. The tRNA molecule binds across the dimer.

Its subcellular location is the cytoplasm. The catalysed reaction is tRNA(Ser) + L-serine + ATP = L-seryl-tRNA(Ser) + AMP + diphosphate + H(+). The enzyme catalyses tRNA(Sec) + L-serine + ATP = L-seryl-tRNA(Sec) + AMP + diphosphate + H(+). The protein operates within aminoacyl-tRNA biosynthesis; selenocysteinyl-tRNA(Sec) biosynthesis; L-seryl-tRNA(Sec) from L-serine and tRNA(Sec): step 1/1. Catalyzes the attachment of serine to tRNA(Ser). Is also able to aminoacylate tRNA(Sec) with serine, to form the misacylated tRNA L-seryl-tRNA(Sec), which will be further converted into selenocysteinyl-tRNA(Sec). In Paraburkholderia phymatum (strain DSM 17167 / CIP 108236 / LMG 21445 / STM815) (Burkholderia phymatum), this protein is Serine--tRNA ligase.